The sequence spans 412 residues: Multifunctional CCA protein (412 aa).

ATP is bound by residues Gly8 and Arg11. The CTP site is built by Gly8 and Arg11. The Mg(2+) site is built by Asp21 and Asp23. ATP-binding residues include Arg91, Arg137, and Arg140. 3 residues coordinate CTP: Arg91, Arg137, and Arg140. The 102-residue stretch at 226 to 327 folds into the HD domain; sequence TGIHTMMVID…VTLFEKTDAL (102 aa).

This sequence belongs to the tRNA nucleotidyltransferase/poly(A) polymerase family. Bacterial CCA-adding enzyme type 1 subfamily. In terms of assembly, monomer. Can also form homodimers and oligomers. The cofactor is Mg(2+). Requires Ni(2+) as cofactor.

The enzyme catalyses a tRNA precursor + 2 CTP + ATP = a tRNA with a 3' CCA end + 3 diphosphate. It catalyses the reaction a tRNA with a 3' CCA end + 2 CTP + ATP = a tRNA with a 3' CCACCA end + 3 diphosphate. Catalyzes the addition and repair of the essential 3'-terminal CCA sequence in tRNAs without using a nucleic acid template. Adds these three nucleotides in the order of C, C, and A to the tRNA nucleotide-73, using CTP and ATP as substrates and producing inorganic pyrophosphate. tRNA 3'-terminal CCA addition is required both for tRNA processing and repair. Also involved in tRNA surveillance by mediating tandem CCA addition to generate a CCACCA at the 3' terminus of unstable tRNAs. While stable tRNAs receive only 3'-terminal CCA, unstable tRNAs are marked with CCACCA and rapidly degraded. The protein is Multifunctional CCA protein of Dechloromonas aromatica (strain RCB).